Consider the following 153-residue polypeptide: Aspartate carbamoyltransferase regulatory chain (153 aa).

Residues Cys108, Cys113, Cys137, and Cys140 each coordinate Zn(2+).

This sequence belongs to the PyrI family. Contains catalytic and regulatory chains. Requires Zn(2+) as cofactor.

Its function is as follows. Involved in allosteric regulation of aspartate carbamoyltransferase. In Methanosphaera stadtmanae (strain ATCC 43021 / DSM 3091 / JCM 11832 / MCB-3), this protein is Aspartate carbamoyltransferase regulatory chain.